Here is a 268-residue protein sequence, read N- to C-terminus: Glutamate racemase (268 aa).

Residues 10–11 (DS) and 42–43 (YG) contribute to the substrate site. Catalysis depends on Cys-73, which acts as the Proton donor/acceptor. 74–75 (NT) is a binding site for substrate. Catalysis depends on Cys-184, which acts as the Proton donor/acceptor. 185–186 (TH) provides a ligand contact to substrate.

The protein belongs to the aspartate/glutamate racemases family.

It catalyses the reaction L-glutamate = D-glutamate. It participates in cell wall biogenesis; peptidoglycan biosynthesis. Functionally, provides the (R)-glutamate required for cell wall biosynthesis. The chain is Glutamate racemase from Limosilactobacillus fermentum (strain NBRC 3956 / LMG 18251) (Lactobacillus fermentum).